Here is a 659-residue protein sequence, read N- to C-terminus: Acetyl-coenzyme A synthetase (659 aa).

Residues 206 to 209 (RRGK) and threonine 324 contribute to the CoA site. Residues 400–402 (GEP), 424–429 (DTWWQT), aspartate 516, arginine 531, and arginine 542 contribute to the ATP site. Valine 553 and histidine 555 together coordinate Mg(2+). Residue arginine 600 participates in CoA binding.

It belongs to the ATP-dependent AMP-binding enzyme family. Mg(2+) is required as a cofactor.

The enzyme catalyses acetate + ATP + CoA = acetyl-CoA + AMP + diphosphate. Functionally, catalyzes the conversion of acetate into acetyl-CoA (AcCoA), an essential intermediate at the junction of anabolic and catabolic pathways. AcsA undergoes a two-step reaction. In the first half reaction, AcsA combines acetate with ATP to form acetyl-adenylate (AcAMP) intermediate. In the second half reaction, it can then transfer the acetyl group from AcAMP to the sulfhydryl group of CoA, forming the product AcCoA. In Methanothrix thermoacetophila (strain DSM 6194 / JCM 14653 / NBRC 101360 / PT) (Methanosaeta thermophila), this protein is Acetyl-coenzyme A synthetase (acsA).